We begin with the raw amino-acid sequence, 163 residues long: T-cell surface glycoprotein CD3 zeta chain (163 aa).

The first 21 residues, 1–21 (MKWKALFTAAILQAQLPITEA), serve as a signal peptide directing secretion. At 22–30 (QSFGLLDPK) the chain is on the extracellular side. The helical transmembrane segment at 31 to 51 (LCYLLDGILFIYGVILTALFL) threads the bilayer. The Cytoplasmic segment spans residues 52-163 (RVKFSRSADA…ALHMQALPPR (112 aa)). Ser-58 bears the Phosphoserine mark. ITAM domains lie at 61 to 89 (APAYQQGQNQLYNELNLGRREEYDVLDKR), 99 to 127 (KPRRKNPQEGLYNELQKDKMAEAYSEIGM), and 130 to 158 (ERRRGKGHDGLYQGLSTATKDTYDALHMQ). Residues Tyr-64, Tyr-72, Tyr-83, Tyr-110, Tyr-122, Tyr-141, and Tyr-152 each carry the phosphotyrosine modification. The span at 83–98 (YDVLDKRRGRDPEMGG) shows a compositional bias: basic and acidic residues. The interval 83-111 (YDVLDKRRGRDPEMGGKPRRKNPQEGLYN) is disordered.

Belongs to the CD3Z/FCER1G family. As to quaternary structure, the TCR-CD3 complex is composed of a CD3D/CD3E and a CD3G/CD3E heterodimers that preferentially associate with TCRalpha and TCRbeta, respectively, to form TCRalpha/CD3E/CD3G and TCRbeta/CD3G/CD3E trimers. In turn, the hexamer interacts with CD3Z homodimer to form the TCR-CD3 complex. Alternatively, TCRalpha and TCRbeta can be replaced by TCRgamma and TCRdelta. Interacts with SLA. Interacts with TRAT1. Interacts with DOCK2. Interacts with SLA2. Interacts with SHB. Interacts with ZAP70. Interacts (tyrosine phosphorylated) with SHC1 (via SH2 domain). Interacts with PTPRC. Interacts with CRK; this interaction regulates CD3Z phosphorylation. Interacts (on T cell side) with CD81, ICAM1 and CD9 at immunological synapses between antigen-presenting cells and T cells. Interacts with CD160. Interacts with LY6E. Interacts with LY6E. The signaling subunit of immunoglobulin gamma (IgG) Fc receptor complex. As a homodimer or a heterodimer with FCER1G, associates with the ligand binding subunit FCGR3A (via transmembrane domain); this interaction is a prerequisite for Fc receptor complex expression on the cell surface. Interacts with CD5. In terms of processing, phosphorylated on Tyr residues after T-cell receptor triggering by LCK in association with CD4/CD8.

Its subcellular location is the cell membrane. Part of the TCR-CD3 complex present on T-lymphocyte cell surface that plays an essential role in adaptive immune response. When antigen presenting cells (APCs) activate T-cell receptor (TCR), TCR-mediated signals are transmitted across the cell membrane by the CD3 chains CD3D, CD3E, CD3G and CD3Z. All CD3 chains contain immunoreceptor tyrosine-based activation motifs (ITAMs) in their cytoplasmic domain. Upon TCR engagement, these motifs become phosphorylated by Src family protein tyrosine kinases LCK and FYN, resulting in the activation of downstream signaling pathways. CD3Z ITAMs phosphorylation creates multiple docking sites for the protein kinase ZAP70 leading to ZAP70 phosphorylation and its conversion into a catalytically active enzyme. Plays an important role in intrathymic T-cell differentiation. Additionally, participates in the activity-dependent synapse formation of retinal ganglion cells (RGCs) in both the retina and dorsal lateral geniculate nucleus (dLGN). This Sus scrofa (Pig) protein is T-cell surface glycoprotein CD3 zeta chain (CD247).